A 353-amino-acid chain; its full sequence is Melanin-concentrating hormone receptor 1 (353 aa).

The interval 1–29 (MDLEASLLPTGPNASNTSDGPDNLTSAGS) is disordered. The Extracellular portion of the chain corresponds to 1-44 (MDLEASLLPTGPNASNTSDGPDNLTSAGSPPRTGSISYINIIMP). Residues 12-29 (PNASNTSDGPDNLTSAGS) are compositionally biased toward polar residues. Asn13, Asn16, and Asn23 each carry an N-linked (GlcNAc...) asparagine glycan. Residues 45-67 (SVFGTICLLGIIGNSTVIFAVVK) form a helical membrane-spanning segment. At 68–79 (KSKLHWCNNVPD) the chain is on the cytoplasmic side. Residues 80–102 (IFIINLSVVDLLFLLGMPFMIHQ) traverse the membrane as a helical segment. Residues 103 to 116 (LMGNGVWHFGETMC) are Extracellular-facing. A disulfide bridge connects residues Cys116 and Cys194. Residues 117–139 (TLITAMDANSQFTSTYILTAMAI) traverse the membrane as a helical segment. Over 140–158 (DRYLATVHPISSTKFRKPS) the chain is Cytoplasmic. Residues 159–181 (VATLVICLLWALSFISITPVWLY) form a helical membrane-spanning segment. Residues 182 to 209 (ARLIPFPGGAVGCGIRLPNPDTDLYWFT) lie on the Extracellular side of the membrane. A helical transmembrane segment spans residues 210–232 (LYQFFLAFALPFVVITAAYVRIL). At 233 to 252 (QRMTSSVAPASQRSIRLRTK) the chain is on the cytoplasmic side. A helical transmembrane segment spans residues 253–275 (RVTRTAIAICLVFFVCWAPYYVL). Residues 276-289 (QLTQLSISRPTLTF) are Extracellular-facing. The helical transmembrane segment at 290-312 (VYLYNAAISLGYANSCLNPFVYI) threads the bilayer. At 313–353 (VLCETFRKRLVLSVKPAAQGQLRAVSNAQTADEERTESKGT) the chain is on the cytoplasmic side.

It belongs to the G-protein coupled receptor 1 family. In terms of assembly, interacts with NCDN. In terms of tissue distribution, highest level in brain, particularly in the frontal cortex and hypothalamus, lower levels in the liver and heart.

The protein localises to the cell membrane. Functionally, receptor for melanin-concentrating hormone, coupled to both G proteins that inhibit adenylyl cyclase and G proteins that activate phosphoinositide hydrolysis. This is Melanin-concentrating hormone receptor 1 from Homo sapiens (Human).